Reading from the N-terminus, the 515-residue chain is 2-isopropylmalate synthase (515 aa).

The 261-residue stretch at 4–264 (VKIFDTTLRD…NIGINQDTTQ (261 aa)) folds into the Pyruvate carboxyltransferase domain. Mn(2+) is bound by residues Asp13, His201, His203, and Asn237. A regulatory domain region spans residues 390–515 (ELDYLSVNTG…RQTTSAQEGI (126 aa)).

It belongs to the alpha-IPM synthase/homocitrate synthase family. LeuA type 1 subfamily. As to quaternary structure, homodimer. The cofactor is Mn(2+).

The protein resides in the cytoplasm. It catalyses the reaction 3-methyl-2-oxobutanoate + acetyl-CoA + H2O = (2S)-2-isopropylmalate + CoA + H(+). It participates in amino-acid biosynthesis; L-leucine biosynthesis; L-leucine from 3-methyl-2-oxobutanoate: step 1/4. Functionally, catalyzes the condensation of the acetyl group of acetyl-CoA with 3-methyl-2-oxobutanoate (2-ketoisovalerate) to form 3-carboxy-3-hydroxy-4-methylpentanoate (2-isopropylmalate). This chain is 2-isopropylmalate synthase, found in Halothermothrix orenii (strain H 168 / OCM 544 / DSM 9562).